Here is a 294-residue protein sequence, read N- to C-terminus: tRNA dimethylallyltransferase (294 aa).

An ATP-binding site is contributed by 10–17 (GPTAVGKT). 12 to 17 (TAVGKT) is a binding site for substrate. The interval 35–38 (DSQQ) is interaction with substrate tRNA.

The protein belongs to the IPP transferase family. As to quaternary structure, monomer. It depends on Mg(2+) as a cofactor.

The enzyme catalyses adenosine(37) in tRNA + dimethylallyl diphosphate = N(6)-dimethylallyladenosine(37) in tRNA + diphosphate. Catalyzes the transfer of a dimethylallyl group onto the adenine at position 37 in tRNAs that read codons beginning with uridine, leading to the formation of N6-(dimethylallyl)adenosine (i(6)A). This is tRNA dimethylallyltransferase from Streptococcus gordonii (strain Challis / ATCC 35105 / BCRC 15272 / CH1 / DL1 / V288).